A 351-amino-acid polypeptide reads, in one-letter code: Rhodopsin (351 aa).

Over 1 to 36 (MNGTEGPYFYVPMVNTTGVVRSPYEYPQYYLVNPAA) the chain is Extracellular. N-linked (GlcNAc...) asparagine glycans are attached at residues asparagine 2 and asparagine 15. A helical membrane pass occupies residues 37–61 (FAVLGAYMFFLIIFGFPINFLTLYV). Residues 62–73 (TLEHKKLRTPLN) are Cytoplasmic-facing. A helical transmembrane segment spans residues 74-96 (YILLNLAVADLFMVIGGFTTTMY). Topologically, residues 97–110 (SSMHGYFVLGRLGC) are extracellular. Cysteine 110 and cysteine 187 form a disulfide bridge. Residues 111–133 (NLEGFSATLGGMISLWSLAVLAI) form a helical membrane-spanning segment. Positions 134–136 (ERW) match the 'Ionic lock' involved in activated form stabilization motif. Residues 134-152 (ERWVVVCKPTSNFRFGENH) lie on the Cytoplasmic side of the membrane. Residues 153 to 173 (AIMGVSLTWTMALACTVPPLV) traverse the membrane as a helical segment. At 174-202 (GWSRYIPEGMQCSCGIDYYTRAEGFNNES) the chain is on the extracellular side. Asparagine 200 carries an N-linked (GlcNAc...) asparagine glycan. A helical membrane pass occupies residues 203-224 (FVLYMFFCHFMVPLIIIFFCYG). The Cytoplasmic portion of the chain corresponds to 225–252 (RLLCAVKEAAAAQQESETTQRAEREVTR). Residues 253–274 (MVILMVIGYLVCWLPYASVAWF) form a helical membrane-spanning segment. Over 275-286 (IFTHQGSEFGPL) the chain is Extracellular. A helical transmembrane segment spans residues 287 to 308 (FMTIPAFFAKSSSIYNPVIYIC). Lysine 296 bears the N6-(retinylidene)lysine mark. Residues 309–351 (MNKQFRNCMITTLFCGKNPFEGEEEGASSTKTEASSASSVSPA) lie on the Cytoplasmic side of the membrane. Cysteine 323 carries S-palmitoyl cysteine lipidation. Residues 330–351 (GEEEGASSTKTEASSASSVSPA) form a disordered region. A compositionally biased stretch (low complexity) spans 335-351 (ASSTKTEASSASSVSPA).

The protein belongs to the G-protein coupled receptor 1 family. Opsin subfamily. In terms of processing, phosphorylated on some or all of the serine and threonine residues present in the C-terminal region. Contains one covalently linked retinal chromophore.

The protein resides in the membrane. It is found in the cell projection. The protein localises to the cilium. Its subcellular location is the photoreceptor outer segment. Functionally, photoreceptor required for image-forming vision at low light intensity. While most salt water fish species use retinal as chromophore, most freshwater fish use 3-dehydroretinal, or a mixture of retinal and 3-dehydroretinal. Light-induced isomerization of 11-cis to all-trans retinal triggers a conformational change that activates signaling via G-proteins. Subsequent receptor phosphorylation mediates displacement of the bound G-protein alpha subunit by arrestin and terminates signaling. The protein is Rhodopsin (rho) of Neoniphon sammara (Spotfin squirrelfish).